Here is a 439-residue protein sequence, read N- to C-terminus: MSKLYLMSLGCNKNLVDSEIMLGRLSAYELCDEPSKADVLIVNTCGFIDSAKKESINAILDLHEQRKKDSLLVVTGCLMQRYREELMKELPEVDLFTGVGDYERIDEMILKKTNLFSNSTYLQSENSKRIITGSNSHAFIKIAEGCNQKCSFCAIPSFKGKLKSREISSIIAELKDLVARGYKDFSFIAQDTSSYLFDKGEKDGLIRLIDEVEKIKGIRAARILYLYPTSASEALIKRIIASEIFINYFDMPLQHISDNMLKIMKRGANSTRLKEMLNLMKSAPNSFLRTGFIVGHPGESEADFEELCEFVKDFGFDRISVFAYSKEEDTAAFDMEQVPFKVINKRLKIIEKIVDEVIEKSFEKEVGQKRLVVCTGKSSEGEFFIAAKDLRWDREIDGEILINESECGNLEMGQIYECEILQNLDKKLLAKALRKVDAN.

One can recognise an MTTase N-terminal domain in the interval 2–114 (SKLYLMSLGC…IDEMILKKTN (113 aa)). [4Fe-4S] cluster-binding residues include Cys11, Cys45, Cys77, Cys146, Cys150, and Cys153. A Radical SAM core domain is found at 132–363 (TGSNSHAFIK…VDEVIEKSFE (232 aa)).

It belongs to the methylthiotransferase family. RimO subfamily. It depends on [4Fe-4S] cluster as a cofactor.

It localises to the cytoplasm. The enzyme catalyses L-aspartate(89)-[ribosomal protein uS12]-hydrogen + (sulfur carrier)-SH + AH2 + 2 S-adenosyl-L-methionine = 3-methylsulfanyl-L-aspartate(89)-[ribosomal protein uS12]-hydrogen + (sulfur carrier)-H + 5'-deoxyadenosine + L-methionine + A + S-adenosyl-L-homocysteine + 2 H(+). Catalyzes the methylthiolation of an aspartic acid residue of ribosomal protein uS12. The polypeptide is Ribosomal protein uS12 methylthiotransferase RimO (Campylobacter jejuni subsp. jejuni serotype O:6 (strain 81116 / NCTC 11828)).